We begin with the raw amino-acid sequence, 101 residues long: Small ribosomal subunit protein uS14A (101 aa).

The interval 29–73 (AIISSPSTPADARAAAQSELNRQPRDASPVRVRNRDAVDGRPRGH) is disordered. Residues 61 to 70 (RNRDAVDGRP) are compositionally biased toward basic and acidic residues.

It belongs to the universal ribosomal protein uS14 family. As to quaternary structure, part of the 30S ribosomal subunit. Contacts proteins S3 and S10.

Functionally, binds 16S rRNA, required for the assembly of 30S particles and may also be responsible for determining the conformation of the 16S rRNA at the A site. This chain is Small ribosomal subunit protein uS14A, found in Mycolicibacterium gilvum (strain PYR-GCK) (Mycobacterium gilvum (strain PYR-GCK)).